The sequence spans 427 residues: Serine--tRNA ligase (427 aa).

236 to 238 (TAE) is a binding site for L-serine. 267–269 (RRE) serves as a coordination point for ATP. Glutamate 290 lines the L-serine pocket. ATP is bound at residue 354 to 357 (EISS). L-serine is bound at residue serine 390.

It belongs to the class-II aminoacyl-tRNA synthetase family. Type-1 seryl-tRNA synthetase subfamily. Homodimer. The tRNA molecule binds across the dimer.

The protein localises to the cytoplasm. It catalyses the reaction tRNA(Ser) + L-serine + ATP = L-seryl-tRNA(Ser) + AMP + diphosphate + H(+). The enzyme catalyses tRNA(Sec) + L-serine + ATP = L-seryl-tRNA(Sec) + AMP + diphosphate + H(+). It functions in the pathway aminoacyl-tRNA biosynthesis; selenocysteinyl-tRNA(Sec) biosynthesis; L-seryl-tRNA(Sec) from L-serine and tRNA(Sec): step 1/1. In terms of biological role, catalyzes the attachment of serine to tRNA(Ser). Is also able to aminoacylate tRNA(Sec) with serine, to form the misacylated tRNA L-seryl-tRNA(Sec), which will be further converted into selenocysteinyl-tRNA(Sec). The polypeptide is Serine--tRNA ligase (Rippkaea orientalis (strain PCC 8801 / RF-1) (Cyanothece sp. (strain PCC 8801))).